The following is a 68-amino-acid chain: Riparin-1.6 (68 aa).

Residues 1–15 form the signal peptide; it reads MKIIVFLAVLMLVSA. The propeptide occupies 16 to 41; it reads QVCLVSAAEMEHSSDNELSSRDLVKR. A disulfide bridge connects residues Cys-47 and Cys-53. A Cysteine amide modification is found at Cys-53. Positions 57–68 are excised as a propeptide; that stretch reads DIESSEGANGGE.

Expressed by the skin glands.

It is found in the secreted. The sequence is that of Riparin-1.6 from Crinia riparia (Streambank froglet).